The primary structure comprises 498 residues: Putative BTB/POZ domain-containing protein L67 (498 aa).

In terms of domain architecture, BTB spans 26-96 (SDINITLSDN…MYGISLSEIN (71 aa)).

The protein belongs to the mimivirus BTB/WD family.

The polypeptide is Putative BTB/POZ domain-containing protein L67 (Acanthamoeba polyphaga (Amoeba)).